The sequence spans 371 residues: Hsc70-interacting protein (371 aa).

The tract at residues 38–80 (MGGKVPPATHKAKSEENTKEEKRDKTTEENIKTEELSSEESDL) is disordered. Over residues 49–72 (AKSEENTKEEKRDKTTEENIKTEE) the composition is skewed to basic and acidic residues. TPR repeat units lie at residues 113–146 (ANEKKGAAIEALNDGELQKAIDLFTDAIKLNPRL), 147–180 (AILYAKRASVFVKLQKPNAAIRDCDRAIEINPDS), and 181–214 (AQPYKWRGKAHRLLGHWEEAAHDLALACKLDYDE). Basic and acidic residues predominate over residues 255–271 (KAREEHERAQREEEARR). A disordered region spans residues 255–296 (KAREEHERAQREEEARRQSGSQYGSFPGGFPGGMPGNFPGGM). Residues 280–296 (FPGGFPGGMPGNFPGGM) are compositionally biased toward gly residues. The STI1 domain maps to 321–360 (DPEVLAAMQDPEVMVAFQDVAQNPSNMSKYQSNPKVMNLI). Phosphoserine; by GRK5 is present on Ser348. 2 positions are modified to N6-acetyllysine: Lys355 and Lys362.

This sequence belongs to the FAM10 family. In terms of assembly, homotetramer. Interacts with HSC70 as well as DNAJ homologs and HSP90. Interacts (via the C-terminus 302- 318 AA) with GRK5.

It is found in the cytoplasm. One HIP oligomer binds the ATPase domains of at least two HSC70 molecules dependent on activation of the HSC70 ATPase by HSP40. Stabilizes the ADP state of HSC70 that has a high affinity for substrate protein. Through its own chaperone activity, it may contribute to the interaction of HSC70 with various target proteins. The chain is Hsc70-interacting protein (St13) from Mus musculus (Mouse).